A 204-amino-acid chain; its full sequence is Small ribosomal subunit protein uS7 (204 aa).

At Met-1 the chain carries N-acetylmethionine. N-acetylthreonine; in 40S ribosomal protein S5, N-terminally processed is present on Thr-2. A Phosphothreonine modification is found at Thr-14. Lys-47 is subject to N6-acetyllysine; alternate. A Glycyl lysine isopeptide (Lys-Gly) (interchain with G-Cter in SUMO2); alternate cross-link involves residue Lys-47. At Ser-142 the chain carries Phosphoserine.

The protein belongs to the universal ribosomal protein uS7 family. In terms of assembly, component of the small ribosomal subunit. Part of the small subunit (SSU) processome, composed of more than 70 proteins and the RNA chaperone small nucleolar RNA (snoRNA) U3.

It localises to the cytoplasm. Its subcellular location is the nucleus. The protein resides in the nucleolus. Functionally, component of the small ribosomal subunit. The ribosome is a large ribonucleoprotein complex responsible for the synthesis of proteins in the cell. Part of the small subunit (SSU) processome, first precursor of the small eukaryotic ribosomal subunit. During the assembly of the SSU processome in the nucleolus, many ribosome biogenesis factors, an RNA chaperone and ribosomal proteins associate with the nascent pre-rRNA and work in concert to generate RNA folding, modifications, rearrangements and cleavage as well as targeted degradation of pre-ribosomal RNA by the RNA exosome. In Rattus norvegicus (Rat), this protein is Small ribosomal subunit protein uS7 (Rps5).